A 442-amino-acid polypeptide reads, in one-letter code: 3-phosphoshikimate 1-carboxyvinyltransferase (442 aa).

Residues lysine 25, serine 26, and arginine 30 each contribute to the 3-phosphoshikimate site. Lysine 25 is a phosphoenolpyruvate binding site. Phosphoenolpyruvate-binding residues include glycine 97 and arginine 125. Residues serine 170, glutamine 172, aspartate 323, and lysine 350 each coordinate 3-phosphoshikimate. A phosphoenolpyruvate-binding site is contributed by glutamine 172. Residue aspartate 323 is the Proton acceptor of the active site. Positions 354 and 399 each coordinate phosphoenolpyruvate.

It belongs to the EPSP synthase family. In terms of assembly, monomer.

It is found in the cytoplasm. The catalysed reaction is 3-phosphoshikimate + phosphoenolpyruvate = 5-O-(1-carboxyvinyl)-3-phosphoshikimate + phosphate. The protein operates within metabolic intermediate biosynthesis; chorismate biosynthesis; chorismate from D-erythrose 4-phosphate and phosphoenolpyruvate: step 6/7. Functionally, catalyzes the transfer of the enolpyruvyl moiety of phosphoenolpyruvate (PEP) to the 5-hydroxyl of shikimate-3-phosphate (S3P) to produce enolpyruvyl shikimate-3-phosphate and inorganic phosphate. In Bartonella henselae (strain ATCC 49882 / DSM 28221 / CCUG 30454 / Houston 1) (Rochalimaea henselae), this protein is 3-phosphoshikimate 1-carboxyvinyltransferase.